Here is a 322-residue protein sequence, read N- to C-terminus: Lipoyl synthase (322 aa).

7 residues coordinate [4Fe-4S] cluster: Cys69, Cys74, Cys80, Cys95, Cys99, Cys102, and Ser309. Residues Phe81–Thr298 form the Radical SAM core domain.

This sequence belongs to the radical SAM superfamily. Lipoyl synthase family. [4Fe-4S] cluster serves as cofactor.

It localises to the cytoplasm. It catalyses the reaction [[Fe-S] cluster scaffold protein carrying a second [4Fe-4S](2+) cluster] + N(6)-octanoyl-L-lysyl-[protein] + 2 oxidized [2Fe-2S]-[ferredoxin] + 2 S-adenosyl-L-methionine + 4 H(+) = [[Fe-S] cluster scaffold protein] + N(6)-[(R)-dihydrolipoyl]-L-lysyl-[protein] + 4 Fe(3+) + 2 hydrogen sulfide + 2 5'-deoxyadenosine + 2 L-methionine + 2 reduced [2Fe-2S]-[ferredoxin]. The protein operates within protein modification; protein lipoylation via endogenous pathway; protein N(6)-(lipoyl)lysine from octanoyl-[acyl-carrier-protein]: step 2/2. In terms of biological role, catalyzes the radical-mediated insertion of two sulfur atoms into the C-6 and C-8 positions of the octanoyl moiety bound to the lipoyl domains of lipoate-dependent enzymes, thereby converting the octanoylated domains into lipoylated derivatives. The chain is Lipoyl synthase from Photobacterium profundum (strain SS9).